The following is a 115-amino-acid chain: Divalent-cation tolerance protein CutA (115 aa).

Cys-19, His-86, and His-87 together coordinate Cu cation.

The protein belongs to the CutA family. As to quaternary structure, homotrimer. Requires Cu cation as cofactor.

It is found in the cytoplasm. Its function is as follows. Involved in resistance toward heavy metals. This chain is Divalent-cation tolerance protein CutA, found in Citrobacter koseri (strain ATCC BAA-895 / CDC 4225-83 / SGSC4696).